Consider the following 219-residue polypeptide: Translation initiation factor IF-3 (219 aa).

The protein belongs to the IF-3 family. In terms of assembly, monomer.

The protein resides in the cytoplasm. In terms of biological role, IF-3 binds to the 30S ribosomal subunit and shifts the equilibrium between 70S ribosomes and their 50S and 30S subunits in favor of the free subunits, thus enhancing the availability of 30S subunits on which protein synthesis initiation begins. In Prochlorococcus marinus (strain MIT 9313), this protein is Translation initiation factor IF-3.